Here is a 42-residue protein sequence, read N- to C-terminus: Large ribosomal subunit protein bL36 (42 aa).

This sequence belongs to the bacterial ribosomal protein bL36 family.

The polypeptide is Large ribosomal subunit protein bL36 (Wolbachia pipientis wMel).